A 477-amino-acid chain; its full sequence is Aspartyl/glutamyl-tRNA(Asn/Gln) amidotransferase subunit B (477 aa).

It belongs to the GatB/GatE family. GatB subfamily. As to quaternary structure, heterotrimer of A, B and C subunits.

It carries out the reaction L-glutamyl-tRNA(Gln) + L-glutamine + ATP + H2O = L-glutaminyl-tRNA(Gln) + L-glutamate + ADP + phosphate + H(+). It catalyses the reaction L-aspartyl-tRNA(Asn) + L-glutamine + ATP + H2O = L-asparaginyl-tRNA(Asn) + L-glutamate + ADP + phosphate + 2 H(+). Functionally, allows the formation of correctly charged Asn-tRNA(Asn) or Gln-tRNA(Gln) through the transamidation of misacylated Asp-tRNA(Asn) or Glu-tRNA(Gln) in organisms which lack either or both of asparaginyl-tRNA or glutaminyl-tRNA synthetases. The reaction takes place in the presence of glutamine and ATP through an activated phospho-Asp-tRNA(Asn) or phospho-Glu-tRNA(Gln). The sequence is that of Aspartyl/glutamyl-tRNA(Asn/Gln) amidotransferase subunit B from Legionella pneumophila (strain Paris).